A 767-amino-acid polypeptide reads, in one-letter code: Two-component response regulator-like PRR73 (767 aa).

The interval 1 to 64 is disordered; that stretch reads MGSACEAGTD…EPQQTDEQKE (64 aa). One can recognise a Response regulatory domain in the interval 82-200; that stretch reads RVLLVENDDS…ELKNLWQHVW (119 aa). Positions 205–214 are enriched in low complexity; sequence SSSGSGSESG. 5 disordered regions span residues 205–272, 312–388, 476–546, 646–701, and 727–767; these read SSSG…QSSW, RWLP…NEPT, ASNQ…RGKV, ANYS…SGSG, and NFGK…DEDR. A compositionally biased stretch (acidic residues) spans 238 to 252; sequence DNEDDDDNDEDDDDL. Composition is skewed to polar residues over residues 263–272, 343–361, and 488–497; these read DNGSGTQSSW, RNSS…VNPT, and CSPQDNSSEA. The segment covering 518–531 has biased composition (low complexity); that stretch reads GSNGSSNNNDMGSS. The span at 532–543 shows a compositional bias: polar residues; that stretch reads TKNAITKPSSNR. The span at 689–700 shows a compositional bias: gly residues; the sequence is GAGGGNGSGSGS. One can recognise a CCT domain in the interval 712-754; sequence REAALNKFRQKRKVRNFGKKVRYQSRKRLAEQRPRIRGQFVRQ. The segment covering 727–738 has biased composition (basic residues); the sequence is NFGKKVRYQSRK.

This sequence belongs to the ARR-like family.

Its subcellular location is the nucleus. In terms of biological role, controls photoperiodic flowering response. Seems to be one of the component of the circadian clock. Expression of several members of the ARR-like family is controlled by circadian rhythm. The particular coordinated sequential expression of PRR73, PRR37, PRR95, PRR59 and PPR1 result to circadian waves that may be at the basis of the endogenous circadian clock. This is Two-component response regulator-like PRR73 (PRR73) from Oryza sativa subsp. japonica (Rice).